A 101-amino-acid chain; its full sequence is Urease subunit beta (101 aa).

The protein belongs to the urease beta subunit family. As to quaternary structure, heterotrimer of UreA (gamma), UreB (beta) and UreC (alpha) subunits. Three heterotrimers associate to form the active enzyme.

It is found in the cytoplasm. It catalyses the reaction urea + 2 H2O + H(+) = hydrogencarbonate + 2 NH4(+). Its pathway is nitrogen metabolism; urea degradation; CO(2) and NH(3) from urea (urease route): step 1/1. In Cereibacter sphaeroides (strain ATCC 17025 / ATH 2.4.3) (Rhodobacter sphaeroides), this protein is Urease subunit beta.